The primary structure comprises 235 residues: Fms-related tyrosine kinase 3 ligand (235 aa).

An N-terminal signal peptide occupies residues 1–26 (MTVLAPAWSPTTYLLLLLLLSSGLSG). Topologically, residues 27 to 184 (TQDCSFQHSP…EATAPTAPQP (158 aa)) are extracellular. Cystine bridges form between cysteine 30-cysteine 111, cysteine 70-cysteine 153, and cysteine 119-cysteine 158. Residues asparagine 126 and asparagine 149 are each glycosylated (N-linked (GlcNAc...) asparagine). The helical transmembrane segment at 185–205 (PLLLLLLLPVGLLLLAAAWCL) threads the bilayer. Topologically, residues 206–235 (HWQRTRRRTPRPGEQVPPVPSPQDLLLVEH) are cytoplasmic. The interval 213 to 235 (RTPRPGEQVPPVPSPQDLLLVEH) is disordered.

As to quaternary structure, homodimer (isoform 2).

The protein localises to the cell membrane. It localises to the secreted. Stimulates the proliferation of early hematopoietic cells by activating FLT3. Synergizes well with a number of other colony stimulating factors and interleukins. Required for the development of B cells, and dendritic cells (DCs). The protein is Fms-related tyrosine kinase 3 ligand (FLT3LG) of Homo sapiens (Human).